A 315-amino-acid polypeptide reads, in one-letter code: Methionyl-tRNA formyltransferase (315 aa).

113–116 serves as a coordination point for (6S)-5,6,7,8-tetrahydrofolate; the sequence is SLLP.

This sequence belongs to the Fmt family.

The enzyme catalyses L-methionyl-tRNA(fMet) + (6R)-10-formyltetrahydrofolate = N-formyl-L-methionyl-tRNA(fMet) + (6S)-5,6,7,8-tetrahydrofolate + H(+). Attaches a formyl group to the free amino group of methionyl-tRNA(fMet). The formyl group appears to play a dual role in the initiator identity of N-formylmethionyl-tRNA by promoting its recognition by IF2 and preventing the misappropriation of this tRNA by the elongation apparatus. In Yersinia pseudotuberculosis serotype O:1b (strain IP 31758), this protein is Methionyl-tRNA formyltransferase.